The following is a 449-amino-acid chain: Tubulin alpha-1C chain (449 aa).

An MREC motif motif is present at residues 1 to 4 (MREC). Residue glutamine 11 coordinates GTP. Lysine 40 carries the post-translational modification N6-acetyllysine. GTP is bound by residues glutamate 71, serine 140, glycine 144, threonine 145, threonine 179, asparagine 206, and asparagine 228. Position 71 (glutamate 71) interacts with Mg(2+). Glutamate 254 is a catalytic residue. Tyrosine 282 bears the 3'-nitrotyrosine mark. The residue at position 432 (tyrosine 432) is a Phosphotyrosine. Position 439 is a phosphoserine (serine 439). Residue tyrosine 449 is modified to 3'-nitrotyrosine.

Belongs to the tubulin family. Dimer of alpha and beta chains. A typical microtubule is a hollow water-filled tube with an outer diameter of 25 nm and an inner diameter of 15 nM. Alpha-beta heterodimers associate head-to-tail to form protofilaments running lengthwise along the microtubule wall with the beta-tubulin subunit facing the microtubule plus end conferring a structural polarity. Microtubules usually have 13 protofilaments but different protofilament numbers can be found in some organisms and specialized cells. Requires Mg(2+) as cofactor. In terms of processing, some glutamate residues at the C-terminus are polyglycylated, resulting in polyglycine chains on the gamma-carboxyl group. Glycylation is mainly limited to tubulin incorporated into axonemes (cilia and flagella) whereas glutamylation is prevalent in neuronal cells, centrioles, axonemes, and the mitotic spindle. Both modifications can coexist on the same protein on adjacent residues, and lowering polyglycylation levels increases polyglutamylation, and reciprocally. Cilia and flagella glycylation is required for their stability and maintenance. Flagella glycylation controls sperm motility. Post-translationally, some glutamate residues at the C-terminus are polyglutamylated, resulting in polyglutamate chains on the gamma-carboxyl group. Polyglutamylation plays a key role in microtubule severing by spastin (SPAST). SPAST preferentially recognizes and acts on microtubules decorated with short polyglutamate tails: severing activity by SPAST increases as the number of glutamates per tubulin rises from one to eight, but decreases beyond this glutamylation threshold. Glutamylation is also involved in cilia motility. Acetylation of alpha chains at Lys-40 is located inside the microtubule lumen. This modification has been correlated with increased microtubule stability, intracellular transport and ciliary assembly. In terms of processing, methylation of alpha chains at Lys-40 is found in mitotic microtubules and is required for normal mitosis and cytokinesis contributing to genomic stability. Post-translationally, nitration of Tyr-449 is irreversible and interferes with normal dynein intracellular distribution. Undergoes a tyrosination/detyrosination cycle, the cyclic removal and re-addition of a C-terminal tyrosine residue by the enzymes tubulin tyrosine carboxypeptidase (MATCAP1, VASH1 or VASH2) and tubulin tyrosine ligase (TTL), respectively. In terms of processing, tyrosination promotes microtubule interaction with CAP-Gly domain-containing proteins such as CLIP1, CLIP2 and DCTN1. Tyrosination regulates the initiation of dynein-dynactin motility via interaction with DCTN1, which brings the dynein-dynactin complex into contact with microtubules. In neurons, tyrosinated tubulins mediate the initiation of retrograde vesicle transport. Post-translationally, detyrosination is involved in metaphase plate congression by guiding chromosomes during mitosis: detyrosination promotes interaction with CENPE, promoting pole-proximal transport of chromosomes toward the equator. Detyrosination increases microtubules-dependent mechanotransduction in dystrophic cardiac and skeletal muscle. In cardiomyocytes, detyrosinated microtubules are required to resist to contractile compression during contraction: detyrosination promotes association with desmin (DES) at force-generating sarcomeres, leading to buckled microtubules and mechanical resistance to contraction. Minor alpha-tubulin expressed in all tissues.

It localises to the cytoplasm. The protein localises to the cytoskeleton. The catalysed reaction is GTP + H2O = GDP + phosphate + H(+). In terms of biological role, tubulin is the major constituent of microtubules, a cylinder consisting of laterally associated linear protofilaments composed of alpha- and beta-tubulin heterodimers. Microtubules grow by the addition of GTP-tubulin dimers to the microtubule end, where a stabilizing cap forms. Below the cap, tubulin dimers are in GDP-bound state, owing to GTPase activity of alpha-tubulin. The protein is Tubulin alpha-1C chain (Tuba1c) of Mus musculus (Mouse).